We begin with the raw amino-acid sequence, 519 residues long: Cobyric acid synthase (519 aa).

The region spanning 256–438 is the GATase cobBQ-type domain; sequence WLRVAVPRLP…WHGLFENDAF (183 aa). Catalysis depends on cysteine 337, which acts as the Nucleophile. Residue histidine 430 is part of the active site.

This sequence belongs to the CobB/CobQ family. CobQ subfamily.

It participates in cofactor biosynthesis; adenosylcobalamin biosynthesis. Functionally, catalyzes amidations at positions B, D, E, and G on adenosylcobyrinic A,C-diamide. NH(2) groups are provided by glutamine, and one molecule of ATP is hydrogenolyzed for each amidation. The polypeptide is Cobyric acid synthase (Saccharopolyspora erythraea (strain ATCC 11635 / DSM 40517 / JCM 4748 / NBRC 13426 / NCIMB 8594 / NRRL 2338)).